A 341-amino-acid chain; its full sequence is HTH-type transcriptional repressor PurR (341 aa).

In terms of domain architecture, HTH lacI-type spans 2 to 56 (ATIKDVAKRANVSTTTVSHVINKTRFVAEETRNAVWAAIKELHYSPSAVARSLKV). A DNA-binding region (H-T-H motif) is located at residues 4–23 (IKDVAKRANVSTTTVSHVIN). Residues 48 to 56 (SAVARSLKV) mediate DNA binding. The hypoxanthine site is built by Y73, R190, T192, F221, and D275.

Homodimer.

It participates in purine metabolism; purine nucleotide biosynthesis [regulation]. Its function is as follows. Is the main repressor of the genes involved in the de novo synthesis of purine nucleotides, regulating purB, purC, purEK, purF, purHD, purL, purMN and guaBA expression. PurR is allosterically activated to bind its cognate DNA by binding the purine corepressors, hypoxanthine or guanine, thereby effecting transcription repression. The chain is HTH-type transcriptional repressor PurR from Klebsiella pneumoniae (strain 342).